A 413-amino-acid chain; its full sequence is Multifunctional CCA protein (413 aa).

Residues glycine 8 and arginine 11 each coordinate ATP. The CTP site is built by glycine 8 and arginine 11. Aspartate 21 and aspartate 23 together coordinate Mg(2+). Residues arginine 91, arginine 141, and arginine 144 each coordinate ATP. CTP is bound by residues arginine 91, arginine 141, and arginine 144. The HD domain maps to 230-331; sequence TGAHLLLVLD…VRLLERCDAL (102 aa).

The protein belongs to the tRNA nucleotidyltransferase/poly(A) polymerase family. Bacterial CCA-adding enzyme type 1 subfamily. In terms of assembly, monomer. Can also form homodimers and oligomers. Mg(2+) is required as a cofactor. It depends on Ni(2+) as a cofactor.

The enzyme catalyses a tRNA precursor + 2 CTP + ATP = a tRNA with a 3' CCA end + 3 diphosphate. The catalysed reaction is a tRNA with a 3' CCA end + 2 CTP + ATP = a tRNA with a 3' CCACCA end + 3 diphosphate. In terms of biological role, catalyzes the addition and repair of the essential 3'-terminal CCA sequence in tRNAs without using a nucleic acid template. Adds these three nucleotides in the order of C, C, and A to the tRNA nucleotide-73, using CTP and ATP as substrates and producing inorganic pyrophosphate. tRNA 3'-terminal CCA addition is required both for tRNA processing and repair. Also involved in tRNA surveillance by mediating tandem CCA addition to generate a CCACCA at the 3' terminus of unstable tRNAs. While stable tRNAs receive only 3'-terminal CCA, unstable tRNAs are marked with CCACCA and rapidly degraded. The sequence is that of Multifunctional CCA protein from Verminephrobacter eiseniae (strain EF01-2).